The sequence spans 400 residues: Argininosuccinate synthase (400 aa).

ATP is bound by residues 6 to 14 (AYSGGLDTS) and A33. Positions 84 and 89 each coordinate L-citrulline. G114 contributes to the ATP binding site. L-aspartate-binding residues include T116, N120, and D121. N120 contacts L-citrulline. The L-citrulline site is built by R124, S173, S182, E258, and Y270.

Belongs to the argininosuccinate synthase family. Type 1 subfamily. Homotetramer.

The protein localises to the cytoplasm. It catalyses the reaction L-citrulline + L-aspartate + ATP = 2-(N(omega)-L-arginino)succinate + AMP + diphosphate + H(+). It functions in the pathway amino-acid biosynthesis; L-arginine biosynthesis; L-arginine from L-ornithine and carbamoyl phosphate: step 2/3. The chain is Argininosuccinate synthase from Thermus thermophilus (strain ATCC 27634 / DSM 579 / HB8).